A 432-amino-acid polypeptide reads, in one-letter code: Enolase (432 aa).

(2R)-2-phosphoglycerate is bound at residue Q167. The active-site Proton donor is the E209. 3 residues coordinate Mg(2+): D246, E291, and D318. (2R)-2-phosphoglycerate-binding residues include K343, R372, S373, and K394. K343 serves as the catalytic Proton acceptor.

It belongs to the enolase family. In terms of assembly, component of the RNA degradosome, a multiprotein complex involved in RNA processing and mRNA degradation. The cofactor is Mg(2+).

It is found in the cytoplasm. The protein resides in the secreted. It localises to the cell surface. The enzyme catalyses (2R)-2-phosphoglycerate = phosphoenolpyruvate + H2O. The protein operates within carbohydrate degradation; glycolysis; pyruvate from D-glyceraldehyde 3-phosphate: step 4/5. Its function is as follows. Catalyzes the reversible conversion of 2-phosphoglycerate (2-PG) into phosphoenolpyruvate (PEP). It is essential for the degradation of carbohydrates via glycolysis. The polypeptide is Enolase (Pseudoalteromonas translucida (strain TAC 125)).